We begin with the raw amino-acid sequence, 469 residues long: MKMIQVLGTSSDSGKSTLATAFCRILKDLGYRVSPFKAVNMSLNSIAIKDGSEIARAQWVQAMAAGAEPSAYMNPVLLKPEGHHKSQVIILGRSIGSMGINDYYNYINKNAKIIKESIDFLSNKYDVIISEGAGSPAEINLAGRDFANIYVSSLYNTPAILVADIDRGGVFASIYGTINLMQRSDLLKYYIINKMRGDQSLLYPGIERIEELTGKKCLGIVPYIDLKLPGEDSLDYNFSGSGSIGIVRYPYMENYSDFDPLIFNEKAFYIKNKEDLKRCDVIILPGSKDVFHDLEYINSNGIADSIKRCSGEKMIIGICGGYQMLGKRINDASGVESDGVSIPGLGLLDIETYYNKTKTTGSVKYRFAENQLKINGSGTGYEIHYGSIVKNNEMPLLITDHGPEGSVSSNGMVIGTNVHGILENNEFYRYITGEYLDYDNIIENSIETLAGIVKKSINIEGFLELLNDA.

The GATase cobBQ-type domain maps to 241-427 (SGSIGIVRYP…VHGILENNEF (187 aa)). The active-site Nucleophile is cysteine 319. Residue histidine 419 is part of the active site.

This sequence belongs to the CobB/CobQ family. CobQ subfamily.

The protein operates within cofactor biosynthesis; adenosylcobalamin biosynthesis. Functionally, catalyzes amidations at positions B, D, E, and G on adenosylcobyrinic A,C-diamide. NH(2) groups are provided by glutamine, and one molecule of ATP is hydrogenolyzed for each amidation. This is Probable cobyric acid synthase from Picrophilus torridus (strain ATCC 700027 / DSM 9790 / JCM 10055 / NBRC 100828 / KAW 2/3).